Consider the following 376-residue polypeptide: MTATAQRQLPLDTTGAGQLAQQAELHPELNRAHVRFINLGKTYHGKQGAVEALGSIDLAIQRGEIFGIIGRSGAGKSSLIRTINRLEQPSSGRVLIDQVDIGEFNEDKLVELRRRIGMIFQHFNLMSAKTVWQNVELPLKVAGVPKEQRARKVTQLLELVGLQDKHKAYPAQLSGGQKQRVGIARALVHDPAILLCDEATSALDPETTQSILGLLREINQRLGLTIVLITHEMAVIRDICHRVVVLEQGRIVEQGPVWQVFGDPQHEVSKTLLAPLQLGLPKEWAERLSEYPQRPDAAILLDVHFTGVSDEGPDLAALFATLGGKVQLLQGGVERIQDRAIGHLILLIAGSPHPREELLLRARQLAPRVEVLGYVG.

One can recognise an ABC transporter domain in the interval 34-273 (VRFINLGKTY…PQHEVSKTLL (240 aa)). 70–77 (GRSGAGKS) contacts ATP.

Belongs to the ABC transporter superfamily. Methionine importer (TC 3.A.1.24) family. The complex is composed of two ATP-binding proteins (MetN), two transmembrane proteins (MetI) and a solute-binding protein (MetQ).

It localises to the cell inner membrane. It catalyses the reaction L-methionine(out) + ATP + H2O = L-methionine(in) + ADP + phosphate + H(+). The catalysed reaction is D-methionine(out) + ATP + H2O = D-methionine(in) + ADP + phosphate + H(+). Part of the ABC transporter complex MetNIQ involved in methionine import. Responsible for energy coupling to the transport system. The sequence is that of Methionine import ATP-binding protein MetN 1 from Pseudomonas syringae pv. tomato (strain ATCC BAA-871 / DC3000).